The chain runs to 317 residues: Fe-S cluster assembly protein dre2 (317 aa).

The N-terminal SAM-like domain stretch occupies residues 22–152 (PVQAKRTLLL…KPNFEPSAAV (131 aa)). Positions 153–209 (PLKFGLKKKNKPTPTAVPSIPTGFAAPMGIDSPVTNHDRDEDDELINEDTLLSEEDL) are linker. The [2Fe-2S] cluster site is built by Cys219, Cys230, Cys233, and Cys235. Positions 219 to 235 (CQPKTGRRRRACKDCTC) are fe-S binding site A. Residues Cys280, Cys283, Cys291, and Cys294 each contribute to the [4Fe-4S] cluster site. 2 consecutive short sequence motifs (cx2C motif) follow at residues 280-283 (CGSC) and 291-294 (CDGC). The fe-S binding site B stretch occupies residues 280-294 (CGSCALGDAFRCDGC).

It belongs to the anamorsin family. Monomer. Interacts with tah18. Interacts with mia40. It depends on [2Fe-2S] cluster as a cofactor. Requires [4Fe-4S] cluster as cofactor.

The protein localises to the cytoplasm. Its subcellular location is the mitochondrion intermembrane space. Functionally, component of the cytosolic iron-sulfur (Fe-S) protein assembly (CIA) machinery required for the maturation of extramitochondrial Fe-S proteins. Part of an electron transfer chain functioning in an early step of cytosolic Fe-S biogenesis, facilitating the de novo assembly of a [4Fe-4S] cluster on the scaffold complex cfd1-nbp35. Electrons are transferred to dre2 from NADPH via the FAD- and FMN-containing protein tah18. Tah18-dre2 are also required for the assembly of the diferric tyrosyl radical cofactor of ribonucleotide reductase (RNR), probably by providing electrons for reduction during radical cofactor maturation in the catalytic small subunit rnr2. The chain is Fe-S cluster assembly protein dre2 from Penicillium rubens (strain ATCC 28089 / DSM 1075 / NRRL 1951 / Wisconsin 54-1255) (Penicillium chrysogenum).